Here is a 284-residue protein sequence, read N- to C-terminus: 2-dehydro-3-deoxyphosphooctonate aldolase (284 aa).

Belongs to the KdsA family.

It is found in the cytoplasm. The enzyme catalyses D-arabinose 5-phosphate + phosphoenolpyruvate + H2O = 3-deoxy-alpha-D-manno-2-octulosonate-8-phosphate + phosphate. It participates in carbohydrate biosynthesis; 3-deoxy-D-manno-octulosonate biosynthesis; 3-deoxy-D-manno-octulosonate from D-ribulose 5-phosphate: step 2/3. Its pathway is bacterial outer membrane biogenesis; lipopolysaccharide biosynthesis. This is 2-dehydro-3-deoxyphosphooctonate aldolase from Aliivibrio fischeri (strain ATCC 700601 / ES114) (Vibrio fischeri).